The chain runs to 138 residues: Large ribosomal subunit protein bL19 (138 aa).

Belongs to the bacterial ribosomal protein bL19 family.

This protein is located at the 30S-50S ribosomal subunit interface and may play a role in the structure and function of the aminoacyl-tRNA binding site. The chain is Large ribosomal subunit protein bL19 (rplS) from Rickettsia prowazekii (strain Madrid E).